Here is a 156-residue protein sequence, read N- to C-terminus: MIP18 family protein galla-2 (156 aa).

It belongs to the MIP18 family. As to quaternary structure, component of the CGX complex composed of crb, galla (galla-1 or galla-2) and Xpd. Interacts with crb (via intracellular domain). Also able to interact with Xpd in the absence of crb. Interacts with Mms19.

Its function is as follows. Component of the crb-galla-Xpd (CGX) complex which is essential for proper mitotic chromosome segregation in early embryos. The CGX complex is also required for cell proliferation in developing wing disks. In the CGX complex, acts with crb to recruit Xpd thus forming the functional complex. This chain is MIP18 family protein galla-2, found in Drosophila melanogaster (Fruit fly).